The primary structure comprises 154 residues: 6,7-dimethyl-8-ribityllumazine synthase (154 aa).

Residues phenylalanine 22, 56 to 58 (SFE), and 80 to 82 (AVI) contribute to the 5-amino-6-(D-ribitylamino)uracil site. (2S)-2-hydroxy-3-oxobutyl phosphate is bound at residue 85 to 86 (ST). Histidine 88 acts as the Proton donor in catalysis. Tyrosine 113 lines the 5-amino-6-(D-ribitylamino)uracil pocket. Residue arginine 127 participates in (2S)-2-hydroxy-3-oxobutyl phosphate binding.

This sequence belongs to the DMRL synthase family. In terms of assembly, forms an icosahedral capsid composed of 60 subunits, arranged as a dodecamer of pentamers.

The enzyme catalyses (2S)-2-hydroxy-3-oxobutyl phosphate + 5-amino-6-(D-ribitylamino)uracil = 6,7-dimethyl-8-(1-D-ribityl)lumazine + phosphate + 2 H2O + H(+). The protein operates within cofactor biosynthesis; riboflavin biosynthesis; riboflavin from 2-hydroxy-3-oxobutyl phosphate and 5-amino-6-(D-ribitylamino)uracil: step 1/2. In terms of biological role, catalyzes the formation of 6,7-dimethyl-8-ribityllumazine by condensation of 5-amino-6-(D-ribitylamino)uracil with 3,4-dihydroxy-2-butanone 4-phosphate. This is the penultimate step in the biosynthesis of riboflavin. In Sulfurihydrogenibium sp. (strain YO3AOP1), this protein is 6,7-dimethyl-8-ribityllumazine synthase.